The following is a 38-amino-acid chain: Large ribosomal subunit protein bL36 (38 aa).

This sequence belongs to the bacterial ribosomal protein bL36 family.

This is Large ribosomal subunit protein bL36 from Cupriavidus metallidurans (strain ATCC 43123 / DSM 2839 / NBRC 102507 / CH34) (Ralstonia metallidurans).